The primary structure comprises 351 residues: Probable NADP-dependent isopropanol dehydrogenase (351 aa).

4 residues coordinate Zn(2+): Cys37, His59, Glu60, and Asp150. Residues 175 to 178, 198 to 200, 265 to 267, and Lys340 each bind NADP(+); these read AGPV, DSR, and VNY.

The protein belongs to the zinc-containing alcohol dehydrogenase family. Zn(2+) serves as cofactor.

It catalyses the reaction propan-2-ol + NADP(+) = acetone + NADPH + H(+). In terms of biological role, alcohol dehydrogenase with a preference for medium chain secondary alcohols, such as 2-butanol and isopropanol. Has very low activity with primary alcohols, such as ethanol. Under physiological conditions, the enzyme reduces aldehydes and 2-ketones to produce secondary alcohols. Is also active with acetaldehyde and propionaldehyde. This Mycoplasma pneumoniae (strain ATCC 29342 / M129 / Subtype 1) (Mycoplasmoides pneumoniae) protein is Probable NADP-dependent isopropanol dehydrogenase (adh).